The sequence spans 98 residues: NADH-ubiquinone oxidoreductase chain 4L (98 aa).

A run of 3 helical transmembrane segments spans residues Met-1–Val-21, Leu-26–Leu-46, and Ile-61–Ile-81.

The protein belongs to the complex I subunit 4L family. Core subunit of respiratory chain NADH dehydrogenase (Complex I) which is composed of 45 different subunits.

Its subcellular location is the mitochondrion inner membrane. The enzyme catalyses a ubiquinone + NADH + 5 H(+)(in) = a ubiquinol + NAD(+) + 4 H(+)(out). Its function is as follows. Core subunit of the mitochondrial membrane respiratory chain NADH dehydrogenase (Complex I) which catalyzes electron transfer from NADH through the respiratory chain, using ubiquinone as an electron acceptor. Part of the enzyme membrane arm which is embedded in the lipid bilayer and involved in proton translocation. The sequence is that of NADH-ubiquinone oxidoreductase chain 4L (MT-ND4L) from Chlorocebus aethiops (Green monkey).